The sequence spans 415 residues: Multidrug resistance protein MdtA (415 aa).

Residues 1–21 (MKGSYKSRWVIVIVVVIAAIA) form the signal peptide. Over residues 31-47 (DSQSAAPGATKQAQQSP) the composition is skewed to polar residues. Disordered regions lie at residues 31 to 60 (DSQS…GPLA) and 392 to 415 (EAQS…GARS). A compositionally biased stretch (basic and acidic residues) spans 399–415 (PEEKATSREYAKKGARS).

It belongs to the membrane fusion protein (MFP) (TC 8.A.1) family. In terms of assembly, part of a tripartite efflux system composed of MdtA, MdtB and MdtC.

It localises to the cell inner membrane. In terms of biological role, the MdtABC tripartite complex confers resistance against novobiocin and deoxycholate. The polypeptide is Multidrug resistance protein MdtA (Escherichia coli O8 (strain IAI1)).